We begin with the raw amino-acid sequence, 301 residues long: Acetylglutamate kinase (301 aa).

Residues 72-73 (GG), arginine 94, and asparagine 199 contribute to the substrate site.

Belongs to the acetylglutamate kinase family. ArgB subfamily.

The protein resides in the cytoplasm. It catalyses the reaction N-acetyl-L-glutamate + ATP = N-acetyl-L-glutamyl 5-phosphate + ADP. The protein operates within amino-acid biosynthesis; L-arginine biosynthesis; N(2)-acetyl-L-ornithine from L-glutamate: step 2/4. Catalyzes the ATP-dependent phosphorylation of N-acetyl-L-glutamate. In Bartonella tribocorum (strain CIP 105476 / IBS 506), this protein is Acetylglutamate kinase.